We begin with the raw amino-acid sequence, 208 residues long: Platelet-activating factor receptor (208 aa).

Topologically, residues 1–16 (MEPHDSSHVDSEFRYT) are extracellular. A helical transmembrane segment spans residues 17–38 (LFPIVYSIIFVLGVIANGYVLW). Over 39-54 (VFARLYPSKKFNEIKI) the chain is Cytoplasmic. The helical transmembrane segment at 55-74 (FMVNLTMADMLFLITLPLWI) threads the bilayer. Over 75 to 91 (VYYQNGGNWIFPKFLCN) the chain is Extracellular. Cys90 and Cys173 form a disulfide bridge. The helical transmembrane segment at 92–113 (LAGCLFFINTYCSVAFLGVITY) threads the bilayer. The Cytoplasmic portion of the chain corresponds to 114-133 (NRFQAVTRPIKTAQANTRKR). Residues 134 to 155 (GISLSLVIWVAIVGAASYFFIL) form a helical membrane-spanning segment. At 156–184 (DSTNTVPNSAGSGNITRCFEHYEKGSVPV) the chain is on the extracellular side. An N-linked (GlcNAc...) asparagine glycan is attached at Asn169. A helical membrane pass occupies residues 185–205 (LIIHIFIVFSFFLVFLIILFC). Residues 206–208 (NLV) lie on the Cytoplasmic side of the membrane.

Belongs to the G-protein coupled receptor 1 family. In terms of assembly, interacts with ARRB1.

The protein resides in the cell membrane. Its function is as follows. Receptor for platelet activating factor, a chemotactic phospholipid mediator that possesses potent inflammatory, smooth-muscle contractile and hypotensive activity. Seems to mediate its action via a G protein that activates a phosphatidylinositol-calcium second messenger system. The polypeptide is Platelet-activating factor receptor (PTAFR) (Macaca mulatta (Rhesus macaque)).